The sequence spans 492 residues: NAD(P)H-quinone oxidoreductase subunit 2 A, chloroplastic (492 aa).

13 helical membrane-spanning segments follow: residues 6–26 (LLLFHGSFIFPECILIFGLIL), 39–59 (TPWLYFISSTSLVMSITALLF), 81–101 (VFQFLILLCSTLCIPLSVEYI), 106–126 (MAITEFLLFVLTATLGGMFLC), 131–151 (LITIFVAPECFSLCSYLLSGY), 165–185 (YLLMGGASSSILVHGFSWLYG), 209–229 (PGISIALISITVGIGFKLSPA), 277–297 (WHLLLEILAILSMILGNLIAI), 305–325 (MLAYSSIGQIGYVIIGIIVGD), 329–349 (GYASMITYMLFYISMNLGTFA), 377–397 (ALSSALCLLSLGGIPPLAGFF), 400–420 (LHLFWCGWQAGLYFLVSIGLL), and 466–486 (MIVCVIASTIPGISMNPIIAI).

The protein belongs to the complex I subunit 2 family. NDH is composed of at least 16 different subunits, 5 of which are encoded in the nucleus.

The protein resides in the plastid. Its subcellular location is the chloroplast thylakoid membrane. The catalysed reaction is a plastoquinone + NADH + (n+1) H(+)(in) = a plastoquinol + NAD(+) + n H(+)(out). It catalyses the reaction a plastoquinone + NADPH + (n+1) H(+)(in) = a plastoquinol + NADP(+) + n H(+)(out). In terms of biological role, NDH shuttles electrons from NAD(P)H:plastoquinone, via FMN and iron-sulfur (Fe-S) centers, to quinones in the photosynthetic chain and possibly in a chloroplast respiratory chain. The immediate electron acceptor for the enzyme in this species is believed to be plastoquinone. Couples the redox reaction to proton translocation, and thus conserves the redox energy in a proton gradient. This Illicium oligandrum (Star anise) protein is NAD(P)H-quinone oxidoreductase subunit 2 A, chloroplastic.